Reading from the N-terminus, the 684-residue chain is Threonine--tRNA ligase (684 aa).

The TGS domain occupies 1–60; that stretch reads MSISITLHRSGTSRTQQVDTTTTGLDLFGSDRAVVAMRVDGNLVDLQRELHDGAEVEPVE. The tract at residues 256-567 is catalytic; sequence DHRKLGAELD…LTEHYAGAFP (312 aa). Positions 361, 412, and 544 each coordinate Zn(2+).

The protein belongs to the class-II aminoacyl-tRNA synthetase family. As to quaternary structure, homodimer. Requires Zn(2+) as cofactor.

It is found in the cytoplasm. The catalysed reaction is tRNA(Thr) + L-threonine + ATP = L-threonyl-tRNA(Thr) + AMP + diphosphate + H(+). Functionally, catalyzes the attachment of threonine to tRNA(Thr) in a two-step reaction: L-threonine is first activated by ATP to form Thr-AMP and then transferred to the acceptor end of tRNA(Thr). Also edits incorrectly charged L-seryl-tRNA(Thr). In Cutibacterium acnes (strain DSM 16379 / KPA171202) (Propionibacterium acnes), this protein is Threonine--tRNA ligase.